The chain runs to 490 residues: GTPase Der (490 aa).

EngA-type G domains are found at residues 3-166 (PVVA…MEDL) and 203-376 (IKLA…DSST). Residues 9-16 (GRPNVGKS), 56-60 (DTGGI), 118-121 (NKTD), 209-216 (GRPNVGKS), 256-260 (DTAGV), and 321-324 (NKWD) contribute to the GTP site. Positions 377–461 (RRVGTSMLTR…PIRIQFKEGE (85 aa)) constitute a KH-like domain.

Belongs to the TRAFAC class TrmE-Era-EngA-EngB-Septin-like GTPase superfamily. EngA (Der) GTPase family. In terms of assembly, associates with the 50S ribosomal subunit.

In terms of biological role, GTPase that plays an essential role in the late steps of ribosome biogenesis. The polypeptide is GTPase Der (Escherichia coli O17:K52:H18 (strain UMN026 / ExPEC)).